The sequence spans 113 residues: Prefoldin subunit beta (113 aa).

This sequence belongs to the prefoldin subunit beta family. As to quaternary structure, heterohexamer of two alpha and four beta subunits.

The protein resides in the cytoplasm. Functionally, molecular chaperone capable of stabilizing a range of proteins. Seems to fulfill an ATP-independent, HSP70-like function in archaeal de novo protein folding. This Methanococcus maripaludis (strain C6 / ATCC BAA-1332) protein is Prefoldin subunit beta.